A 154-amino-acid polypeptide reads, in one-letter code: Hydroperoxy fatty acid reductase Gpx2 (154 aa).

The active site involves C34.

The protein belongs to the glutathione peroxidase family. Monomer.

The catalysed reaction is a hydroperoxy polyunsaturated fatty acid + NADPH + H(+) = a hydroxy polyunsaturated fatty acid + NADP(+) + H2O. Mercaptosuccinate, pCMB, and nethylmaleimide act as inhibitors of the catalytic activity. In terms of biological role, hydroperoxy fatty acid reductase essential for the removal of lipid hydroperoxides under normal and stress conditions, leading to the protection of membrane integrity. The sequence is that of Hydroperoxy fatty acid reductase Gpx2 (gpx2) from Synechocystis sp. (strain ATCC 27184 / PCC 6803 / Kazusa).